The sequence spans 200 residues: Urease accessory protein UreG (200 aa).

8–15 (GPVGSGKT) serves as a coordination point for GTP.

Belongs to the SIMIBI class G3E GTPase family. UreG subfamily. Homodimer. UreH, UreF and UreG form a complex that acts as a GTP-hydrolysis-dependent molecular chaperone, activating the urease apoprotein by helping to assemble the nickel containing metallocenter of UreC. The UreE protein probably delivers the nickel.

The protein localises to the cytoplasm. In terms of biological role, facilitates the functional incorporation of the urease nickel metallocenter. This process requires GTP hydrolysis, probably effectuated by UreG. In Helicobacter hepaticus (strain ATCC 51449 / 3B1), this protein is Urease accessory protein UreG.